The chain runs to 140 residues: uncharacterized protein (140 aa).

18–25 (GTNGSGKS) is a binding site for ATP.

This is an uncharacterized protein from Haemophilus influenzae (strain ATCC 51907 / DSM 11121 / KW20 / Rd).